We begin with the raw amino-acid sequence, 1483 residues long: ABC multidrug transporter atrA (1483 aa).

Residues 1 to 19 show a composition bias toward basic and acidic residues; sequence MASHKKSEDPLVVKDRQEQ. Residues 1–92 form a disordered region; the sequence is MASHKKSEDP…NDPAVDPQGP (92 aa). A glycan (N-linked (GlcNAc...) asparagine) is linked at asparagine 32. Polar residues predominate over residues 71 to 82; sequence PTRTSTLATISE. Asparagine 123 and asparagine 322 each carry an N-linked (GlcNAc...) asparagine glycan. The 252-residue stretch at 147–398 folds into the ABC transporter 1 domain; it reads FRIGEMMKNR…FERQGWECPQ (252 aa). 5 consecutive transmembrane segments (helical) span residues 512–532, 539–559, 595–615, 620–640, and 654–674; these read TVST…VFYG, GFTA…LIAM, IPVK…LAGL, GQFF…SAVF, and MGLA…VLPV. Asparagine 718 carries N-linked (GlcNAc...) asparagine glycosylation. A helical membrane pass occupies residues 759-779; it reads FGILIAFLVGFMMIYFIATEL. Asparagine 780 carries N-linked (GlcNAc...) asparagine glycosylation. The ABC transporter 2 domain maps to 840–1083; sequence FTWRDVCYDI…LLNYFESNGA (244 aa). 876-883 lines the ATP pocket; it reads GVSGAGKT. Residues asparagine 947 and asparagine 1146 are each glycosylated (N-linked (GlcNAc...) asparagine). 5 helical membrane-spanning segments follow: residues 1179–1199, 1215–1235, 1254–1274, 1293–1313, and 1320–1340; these read YIAS…FSFF, LFML…LFVT, AFLI…GILT, LVLL…HMAI, and ETAS…CGVM. Residue asparagine 1413 is glycosylated (N-linked (GlcNAc...) asparagine). Residues 1444–1464 form a helical membrane-spanning segment; it reads FGLMWVYIVFNIFLATMLYYT. Residue asparagine 1471 is glycosylated (N-linked (GlcNAc...) asparagine).

This sequence belongs to the ABC transporter superfamily. ABCG family. PDR (TC 3.A.1.205) subfamily.

Its subcellular location is the cell membrane. It carries out the reaction (R)-miconazole(in) + ATP + H2O = (R)-miconazole(out) + ADP + phosphate + H(+). In terms of biological role, pleiotropic ABC efflux transporter involved in the basal level of azole susceptibility. Confers resistance to miconazole and clotrimazole. This is ABC multidrug transporter atrA from Aspergillus oryzae (strain ATCC 42149 / RIB 40) (Yellow koji mold).